We begin with the raw amino-acid sequence, 100 residues long: Nucleoid-associated protein Caur_0522 (100 aa).

It belongs to the YbaB/EbfC family. Homodimer.

It is found in the cytoplasm. The protein localises to the nucleoid. Functionally, binds to DNA and alters its conformation. May be involved in regulation of gene expression, nucleoid organization and DNA protection. This chain is Nucleoid-associated protein Caur_0522, found in Chloroflexus aurantiacus (strain ATCC 29366 / DSM 635 / J-10-fl).